Reading from the N-terminus, the 349-residue chain is Small ribosomal subunit protein eS6 (349 aa).

A disordered region spans residues 224-349 (RRRSRLSSMR…AKKEKKQKKK (126 aa)). Basic and acidic residues-rich tracts occupy residues 231–251 (SMRD…EKAA) and 260–334 (KKEA…EAAK).

The protein belongs to the eukaryotic ribosomal protein eS6 family. Component of the small ribosomal subunit. Part of the small subunit (SSU) processome, composed of more than 70 proteins and the RNA chaperone small nucleolar RNA (snoRNA) U3. Ribosomal protein S6 is the major substrate of protein kinases in eukaryote ribosomes.

Its subcellular location is the cytoplasm. The protein resides in the nucleus. It is found in the nucleolus. In terms of biological role, component of the 40S small ribosomal subunit. Plays an important role in controlling cell growth and proliferation through the selective translation of particular classes of mRNA. Part of the small subunit (SSU) processome, first precursor of the small eukaryotic ribosomal subunit. During the assembly of the SSU processome in the nucleolus, many ribosome biogenesis factors, an RNA chaperone and ribosomal proteins associate with the nascent pre-rRNA and work in concert to generate RNA folding, modifications, rearrangements and cleavage as well as targeted degradation of pre-ribosomal RNA by the RNA exosome. In Aedes albopictus (Asian tiger mosquito), this protein is Small ribosomal subunit protein eS6 (RpS6).